The chain runs to 314 residues: Ribosome production factor 2 homolog (314 aa).

The Brix domain maps to 28 to 238; the sequence is KKTLILHGTK…IRRNRLPNDS (211 aa). The interval 238–314 is disordered; that stretch reads SLMKEAMRTS…VAKKMKVSSE (77 aa). Basic and acidic residues-rich tracts occupy residues 239 to 249 and 275 to 314; these read LMKEAMRTSKD and QKLK…VSSE.

The protein belongs to the RPF2 family.

It localises to the nucleus. Its subcellular location is the nucleolus. The sequence is that of Ribosome production factor 2 homolog from Arabidopsis thaliana (Mouse-ear cress).